The chain runs to 170 residues: Adenine phosphoribosyltransferase (170 aa).

The protein belongs to the purine/pyrimidine phosphoribosyltransferase family. Homodimer.

Its subcellular location is the cytoplasm. The enzyme catalyses AMP + diphosphate = 5-phospho-alpha-D-ribose 1-diphosphate + adenine. It participates in purine metabolism; AMP biosynthesis via salvage pathway; AMP from adenine: step 1/1. Functionally, catalyzes a salvage reaction resulting in the formation of AMP, that is energically less costly than de novo synthesis. The protein is Adenine phosphoribosyltransferase of Prochlorococcus marinus (strain AS9601).